The primary structure comprises 332 residues: o-succinylbenzoate synthase (332 aa).

Residue K135 is the Proton donor of the active site. The Mg(2+) site is built by D163, E192, and D215. The active-site Proton acceptor is the K241.

This sequence belongs to the mandelate racemase/muconate lactonizing enzyme family. MenC type 1 subfamily. Requires a divalent metal cation as cofactor.

The enzyme catalyses (1R,6R)-6-hydroxy-2-succinyl-cyclohexa-2,4-diene-1-carboxylate = 2-succinylbenzoate + H2O. Its pathway is quinol/quinone metabolism; 1,4-dihydroxy-2-naphthoate biosynthesis; 1,4-dihydroxy-2-naphthoate from chorismate: step 4/7. It participates in quinol/quinone metabolism; menaquinone biosynthesis. In terms of biological role, converts 2-succinyl-6-hydroxy-2,4-cyclohexadiene-1-carboxylate (SHCHC) to 2-succinylbenzoate (OSB). This chain is o-succinylbenzoate synthase, found in Vibrio cholerae serotype O1 (strain ATCC 39315 / El Tor Inaba N16961).